The sequence spans 280 residues: Trypsin zeta (280 aa).

The signal sequence occupies residues M1–G22. Positions L23–R38 are cleaved as a propeptide — activation peptide. The 240-residue stretch at I39–A278 folds into the Peptidase S1 domain. Cysteines 72 and 88 form a disulfide. Residues H87 and D134 each act as charge relay system in the active site. Cystine bridges form between C198–C218 and C230–C254. The active-site Charge relay system is S234.

Belongs to the peptidase S1 family.

The protein resides in the secreted. Its subcellular location is the extracellular space. The enzyme catalyses Preferential cleavage: Arg-|-Xaa, Lys-|-Xaa.. This chain is Trypsin zeta (zetaTry), found in Drosophila melanogaster (Fruit fly).